The sequence spans 123 residues: Large ribosomal subunit protein bL21 (123 aa).

The protein belongs to the bacterial ribosomal protein bL21 family. Part of the 50S ribosomal subunit. Contacts protein L20.

This protein binds to 23S rRNA in the presence of protein L20. The protein is Large ribosomal subunit protein bL21 of Rippkaea orientalis (strain PCC 8801 / RF-1) (Cyanothece sp. (strain PCC 8801)).